The primary structure comprises 183 residues: UPF0200 protein Memar_1556 (183 aa).

Residue Gly-8–Gly-15 participates in ATP binding.

The protein belongs to the UPF0200 family.

The protein is UPF0200 protein Memar_1556 of Methanoculleus marisnigri (strain ATCC 35101 / DSM 1498 / JR1).